The sequence spans 427 residues: GTPase Obg (427 aa).

The region spanning methionine 1 to leucine 158 is the Obg domain. Residues alanine 159 to lysine 330 form the OBG-type G domain. GTP is bound by residues glycine 165–serine 172, phenylalanine 190–tyrosine 194, aspartate 212–glycine 215, asparagine 282–aspartate 285, and serine 311–alanine 313. Positions 172 and 192 each coordinate Mg(2+). Residues phenylalanine 347–glutamate 427 enclose the OCT domain.

Belongs to the TRAFAC class OBG-HflX-like GTPase superfamily. OBG GTPase family. As to quaternary structure, monomer. Requires Mg(2+) as cofactor.

The protein resides in the cytoplasm. An essential GTPase which binds GTP, GDP and possibly (p)ppGpp with moderate affinity, with high nucleotide exchange rates and a fairly low GTP hydrolysis rate. Plays a role in control of the cell cycle, stress response, ribosome biogenesis and in those bacteria that undergo differentiation, in morphogenesis control. In Caldicellulosiruptor bescii (strain ATCC BAA-1888 / DSM 6725 / KCTC 15123 / Z-1320) (Anaerocellum thermophilum), this protein is GTPase Obg.